Here is a 202-residue protein sequence, read N- to C-terminus: Ras-related protein Rab-1A (202 aa).

GTP is bound by residues 15–23 (GDSGVGKSC), 33–40 (YSESFIST), 63–67 (DTAGQ), 121–124 (NKSD), and 151–153 (SAK). Residues 37 to 45 (FISTIGVDF) carry the Effector region motif. Positions 180-202 (QTVDKNKVVPGSSAPISPKSGCC) are disordered. 2 S-geranylgeranyl cysteine lipidation sites follow: cysteine 201 and cysteine 202.

The protein belongs to the small GTPase superfamily. Rab family.

The protein resides in the cell membrane. The protein is Ras-related protein Rab-1A (rab1A) of Dictyostelium discoideum (Social amoeba).